Reading from the N-terminus, the 2082-residue chain is MNEIKSESLLQTRPFKLGIEDIQNLGSSYFIENNEKLKKYNNEISSLKKELDILNEKMGKCTTTTKIVEPAKTPEFTFWYYELKEMKGFQDLVMYEVKKKKKHFKVLSHSCLKYLSNREKMKIKKQEEEEKRLKLYSKNISSYMDVFWKKIEKLVWEEKKRELQQTLNKKKEMRFKKFVKEAIKKIKDARHNNAHELFENKYVSMSSNNNSEIVNNNASSVDNGDKELKEDDLTDQEEEDYLLDEQMSSTDESENKEEEINMLDDEANLPIEELLKRMYGFKSGEDYINFMENEDDANEENVIETSHNDEKSGDNSIGEDDNNNDEKGGDNNIDEDDNNNDEKSGDNSIGEDDNNNDHKSGDNNIDEDDNNNDHKSEDNSIGEDDNNNDEKGGDNNIDENDNNSDHKSEDNNIDENDNNSDHQSDQEQFNHETKDDIIKNSSYEHIDNKNYYNKTGEDYKSDKENYSPTRFHNKLKKEKYDEYDTKLKIEKREEENKNYEKDEHEYESDNYDKEKINKKKELILLKNDIENDSDETSEHIKRDSRSSCQKQNCEKKRRIIKDEYNLRRTKIAKSKPSSDNNNSENDNNNDNNNDNNNDNNDDNNDDNNDDNNDDNNDDNNDDNNDDNNNEHKNDSDDNDDILTCNMDEKHLTKIPPIIKATLRDYQHAGLHWLLYLYKNNINGILADEMGLGKTLQCISLLSYLAYYFNIWGPHLVIVPTSILINWEIELKRFCPCFKILSYYGNQNERYKKRVGWFNKDSFHICISSYSTVVKDHLVFKRKRWKYIILDEAHNIKNFNTKRWNIILSLKRDNCLLITGTPLQNSLEELWSLLHFLMPNIFTSHLDFKEWFSDPLNLAIEKSKIHHSKELIDRLHTVIRPYILRRLKKNVEKEMPNKYEHIIKCKLTRRQQILYDEFINNKNVQNTLNTGNYIGLMNILIQLRKVCNHCDLFTNKYIQTPYYYMLSIRYFVPRFFILFEKNYYADFYLILFLHNEFTSLGGRDVTKETSPSSKSFDLAHILTKHNTNELYDNNHISELYDNNHISELYDNNHISELYDNNHISELYDNPMSHKNYKHNSNGYTYPNDPINNMNNNPSGFTKTSEQFGQIVSHERDNNYHMMDHNNMNNLLSKEMVNSLRNDDNSNNNFYKYSLTSNNNDSQTSIHDNKQCDYNKLCADTFNNINSIGNEEKRSLNVLNEQNNNNSKDNNNNIDNNNNIDNNNNIDNNNNIDNNNNIDNNNNNIDNNNNIDNHHNNNQHCNYNDNWPSDYPTNIINHRNAFLSILKLLNQSNPLNNDNNNNNNNNNGNNNIYNMNRYNSRNSRNSSLSNIFSSNTSKMNSFQLDFLYTNSFINQDALCKNSFFVNINIEDVHSYIYNSIYKEYIPKNILSFSDEFLTELNNNYDILSLYIDPYNRYKSYNEYLYKMKEEGTLTNQQSLGDINNKHIYHKSTSNENTHMKNRKTFIYKYNNMFKVINNDTQYQNIFTDDTNNSYYNSLEHNLWIKRNQIDERKKEEEEEQNKYYNVCMNNLYILRNERIPIFGKNFLDLIKKEFTKDKNIVYNYTNNVPIDYYSSVKEVWVEDICEKDNKKRKCKREKRWYKKIKKTNNPPEDSEVYRENSSDVEKYNCDVEKDNCDDEEKDNCDDEDMNSNLSSNVYGCIDISSQNFIHSRYHNPMMNMSYIIEFLFPNMEQFLKRHEKMIHNFTLINNPSVICKSHDIRINNNLLNYSNDKMNPIILQIKNATRVYHDAFLKQSIIFPLNKDISLGSGKLCALEKLLSKCKREGNKCLLFTQFIKMLDILEIFLNHLNYSFIRLDGSTKVEQRQKIVTKFNNDKSIFIFISSTRSGSIGINLTAANVVIFYDTDWNPSIDKQAMDRCHRIGQTKDVHVFRFVCEYTVEENIWKKQLQKRKLDNICINMGNFNNSNTHSKITDTDPTHNKDWFTNVDTIKEVFINKKNNDDDDDMYKDRLLHEQVENKDKMNVRFEKTLEHVEDKDDIRALNETKKETQNEISQNMQEFTTRNDFQDSYNLTSYCFNFLNENLTDSLKQQIDEMRMKIEIEMMNTGDENMSLSDLSNKSHNSE.

One can recognise an HSA domain in the interval 66–138 (KIVEPAKTPE…EEKRLKLYSK (73 aa)). A compositionally biased stretch (low complexity) spans 209 to 221 (NNSEIVNNNASSV). Disordered regions lie at residues 209-234 (NNSEIVNNNASSVDNGDKELKEDDLT) and 301-470 (NVIE…SPTR). Composition is skewed to basic and acidic residues over residues 419–448 (NSDHQSDQEQFNHETKDDIIKNSSYEHIDN) and 455–465 (TGEDYKSDKEN). Positions 476–531 (KKEKYDEYDTKLKIEKREEENKNYEKDEHEYESDNYDKEKINKKKELILLKNDIEN) form a coiled coil. The segment at 532–641 (DSDETSEHIK…KNDSDDNDDI (110 aa)) is disordered. Residues 536–545 (TSEHIKRDSR) are compositionally biased toward basic and acidic residues. Over residues 579–598 (DNNNSENDNNNDNNNDNNND) the composition is skewed to low complexity. The segment covering 599–627 (NNDDNNDDNNDDNNDDNNDDNNDDNNDDN) has biased composition (acidic residues). The 166-residue stretch at 674 to 839 (LYLYKNNING…WSLLHFLMPN (166 aa)) folds into the Helicase ATP-binding domain. 687–694 (DEMGLGKT) is a binding site for ATP. A DEAH box motif is present at residues 790–793 (DEAH). Residues 1199-1255 (EQNNNNSKDNNNNIDNNNNIDNNNNIDNNNNIDNNNNIDNNNNNIDNNNNIDNHHNN) are disordered. In terms of domain architecture, Helicase C-terminal spans 1772–1922 (ALEKLLSKCK…NICINMGNFN (151 aa)). Positions 1972–2060 (EQVENKDKMN…DEMRMKIEIE (89 aa)) form a coiled coil.

It belongs to the SNF2/RAD54 helicase family. SWR1 subfamily. In terms of assembly, component of a chromatin-remodeling complex.

The protein resides in the nucleus. In terms of biological role, catalytic component of a chromatin remodeling complex. In Plasmodium falciparum (isolate 3D7), this protein is Probable ATP-dependent helicase PF08_0048.